We begin with the raw amino-acid sequence, 1534 residues long: Activating signal cointegrator 1 complex subunit 3 (1534 aa).

Residues 83 to 267 (ETAYNTNENL…FLHVNPFIGL (185 aa)) form the Helicase ATP-binding 1 domain. Residue 96 to 103 (APTGAGKT) coordinates ATP. A DEVH box motif is present at residues 209-212 (DEVH). The Helicase C-terminal 1 domain occupies 294-500 (QLHDMEEVCY…SLADNLNAEI (207 aa)). An SEC63 1 domain is found at 576-849 (STDLGRTASH…GSEAVCIINF (274 aa)). Positions 898 to 1073 (HTLYHTDTNV…WLGIGQVGLF (176 aa)) constitute a Helicase ATP-binding 2 domain. 911–918 (APTGSGKT) provides a ligand contact to ATP. The short motif at 1015–1018 (DEIH) is the DEIH box element. In terms of domain architecture, Helicase C-terminal 2 spans 1106-1313 (PVFQAIRTHS…GTVTSKQDAM (208 aa)). The 108-residue stretch at 1374–1481 (PLTYGRISSY…TLPHIQKQEL (108 aa)) folds into the SEC63 2 domain.

This sequence belongs to the helicase family.

It localises to the nucleus. Its subcellular location is the nucleus speckle. It is found in the cytoplasm. The protein resides in the cytosol. It carries out the reaction Couples ATP hydrolysis with the unwinding of duplex DNA by translocating in the 3'-5' direction.. The enzyme catalyses ATP + H2O = ADP + phosphate + H(+). In terms of biological role, 3'-5' DNA helicase involved in repair of alkylated DNA. Promotes DNA unwinding to generate single-stranded substrate needed for alkbh3, enabling alkbh3 to process alkylated N3-methylcytosine (3mC) within double-stranded regions. Also involved in activation of the ribosome quality control (RQC) pathway, a pathway that degrades nascent peptide chains during problematic translation. Drives the splitting of stalled ribosomes. The sequence is that of Activating signal cointegrator 1 complex subunit 3 (ascc3) from Danio rerio (Zebrafish).